A 122-amino-acid polypeptide reads, in one-letter code: Large ribosomal subunit protein uL14 (122 aa).

The protein belongs to the universal ribosomal protein uL14 family. Part of the 50S ribosomal subunit. Forms a cluster with proteins L3 and L19. In the 70S ribosome, L14 and L19 interact and together make contacts with the 16S rRNA in bridges B5 and B8.

Binds to 23S rRNA. Forms part of two intersubunit bridges in the 70S ribosome. This chain is Large ribosomal subunit protein uL14, found in Lactobacillus delbrueckii subsp. bulgaricus (strain ATCC BAA-365 / Lb-18).